Here is a 212-residue protein sequence, read N- to C-terminus: Deoxyribose-phosphate aldolase (212 aa).

Asp89 acts as the Proton donor/acceptor in catalysis. The active-site Schiff-base intermediate with acetaldehyde is Lys151. Catalysis depends on Lys180, which acts as the Proton donor/acceptor.

The protein belongs to the DeoC/FbaB aldolase family. DeoC type 1 subfamily.

It localises to the cytoplasm. The enzyme catalyses 2-deoxy-D-ribose 5-phosphate = D-glyceraldehyde 3-phosphate + acetaldehyde. It functions in the pathway carbohydrate degradation; 2-deoxy-D-ribose 1-phosphate degradation; D-glyceraldehyde 3-phosphate and acetaldehyde from 2-deoxy-alpha-D-ribose 1-phosphate: step 2/2. Its function is as follows. Catalyzes a reversible aldol reaction between acetaldehyde and D-glyceraldehyde 3-phosphate to generate 2-deoxy-D-ribose 5-phosphate. The sequence is that of Deoxyribose-phosphate aldolase from Clostridium botulinum (strain 657 / Type Ba4).